The chain runs to 676 residues: GRB2-associated-binding protein 2 (676 aa).

Position 2 is a phosphoserine (Ser2). Residues 6 to 117 (DVVCTGWLRK…WVQSICQICG (112 aa)) enclose the PH domain. The interval 127 to 178 (SLRNVSSAGHGPRSSPAELSSSSQHLLRERKSSAPSHSSQPTLFTFEPPVSN) is disordered. A phosphoserine mark is found at Ser133, Ser140, Ser141, Ser148, Ser149, Ser159, Ser164, Ser210, Ser218, Ser223, and Ser264. Over residues 140–149 (SSPAELSSSS) the composition is skewed to low complexity. Residues 159–169 (SAPSHSSQPTL) show a composition bias toward polar residues. Thr265 carries the phosphothreonine modification. Tyr266 bears the Phosphotyrosine mark. Thr278 carries the post-translational modification Phosphothreonine. 2 positions are modified to phosphoserine: Ser281 and Ser285. Thr287 carries the phosphothreonine modification. Position 293 is a phosphotyrosine (Tyr293). A Phosphothreonine modification is found at Thr331. The tract at residues 341 to 430 (VATPGDSAIA…RSAESMSDGV (90 aa)) is disordered. The short motif at 351 to 358 (PPPRPPKP) is the SH3-binding element. Ser368 is subject to Phosphoserine. Residues Thr385 and Thr391 each carry the phosphothreonine modification. At Ser405 the chain carries Phosphoserine. Position 408 is a phosphothreonine (Thr408). A phosphoserine mark is found at Ser422 and Ser425. The residue at position 452 (Tyr452) is a Phosphotyrosine. Position 480 is a phosphoserine (Ser480). Residues 492–531 (PSTTLPVHRGPSRGSEIQPPPVNRNLKPDRKAKPTPLDLR) form a disordered region. The short motif at 510–519 (PPPVNRNLKP) is the SH3-binding element. Ser543 bears the Phosphoserine mark. Polar residues-rich tracts occupy residues 556–577 (FNSSSSQYCRPISTQSITSTDS) and 589–611 (NPVSASPVPSGTNSPAPKKSTGS). Disordered regions lie at residues 556–643 (FNSS…KVDY) and 656–676 (NTMQEWTDVRQSSEPSKGAKL). Ser622 and Ser623 each carry phosphoserine. Tyr643 bears the Phosphotyrosine mark. The span at 656 to 670 (NTMQEWTDVRQSSEP) shows a compositional bias: polar residues.

The protein belongs to the GAB family. Part of a complex composed of EEIG1, TNFRSF11A/RANK, PLCG2, GAB2, TEC and BTK; complex formation increases in the presence of TNFSF11/RANKL. Interacts with SHC1; may mediate interaction with receptors. Interacts with SYK. Interacts with PI-3 kinase. Interacts with GRB2 (via SH3 2 domain). Interacts (phosphorylated) with PTPN11. Interacts with TNFRSF11A (via cytoplasmic domain). Interacts (phosphorylated) with 14-3-3 family proteins SFN, YWHAB, YWHAE, YWHAG, YWHAH, YWHAQ and YWHAZ; prevents interaction with GRB2 and attenuates GAB2 signaling. Interacts with HCK. Phosphorylated on tyrosine residue(s) by the thrombopoietin receptor (TPOR), stem cell factor receptor (SCFR), and T-cell and B-cell antigen receptors, gp130, IL-2R and IL-3R. Phosphorylated upon stimulation of TNFRSF11A/RANK by TNFSF11/RANKL. Phosphorylated upon EGF stimulation. Phosphorylated on tyrosine residues by HCK upon IL6 signaling. In terms of processing, dephosphorylated by PTPN11.

The protein resides in the cytoplasm. It is found in the cell membrane. The protein localises to the membrane raft. Its function is as follows. Adapter protein which acts downstream of several membrane receptors including cytokine, antigen, hormone, cell matrix and growth factor receptors to regulate multiple signaling pathways. Regulates osteoclast differentiation mediating the TNFRSF11A/RANK signaling. In allergic response, it plays a role in mast cells activation and degranulation through PI-3-kinase regulation. Also involved in the regulation of cell proliferation and hematopoiesis. This Homo sapiens (Human) protein is GRB2-associated-binding protein 2 (GAB2).